The primary structure comprises 250 residues: Triosephosphate isomerase (250 aa).

Substrate is bound at residue N10–K12. The Electrophile role is filled by H96. E168 acts as the Proton acceptor in catalysis. Substrate is bound by residues G174, S214, and G235 to G236.

The protein belongs to the triosephosphate isomerase family. As to quaternary structure, homodimer.

It localises to the cytoplasm. The enzyme catalyses D-glyceraldehyde 3-phosphate = dihydroxyacetone phosphate. It participates in carbohydrate biosynthesis; gluconeogenesis. It functions in the pathway carbohydrate degradation; glycolysis; D-glyceraldehyde 3-phosphate from glycerone phosphate: step 1/1. Functionally, involved in the gluconeogenesis. Catalyzes stereospecifically the conversion of dihydroxyacetone phosphate (DHAP) to D-glyceraldehyde-3-phosphate (G3P). The sequence is that of Triosephosphate isomerase from Streptococcus suis (strain 98HAH33).